The following is a 333-amino-acid chain: Anthranilate phosphoribosyltransferase (333 aa).

5-phospho-alpha-D-ribose 1-diphosphate is bound by residues Gly-81, Gly-84 to Asp-85, Thr-89, Asn-91 to Thr-94, Lys-109 to Ser-117, and Ala-121. Position 81 (Gly-81) interacts with anthranilate. Ser-93 is a binding site for Mg(2+). Asn-112 provides a ligand contact to anthranilate. An anthranilate-binding site is contributed by Arg-167. Residues Asp-225 and Glu-226 each coordinate Mg(2+).

Belongs to the anthranilate phosphoribosyltransferase family. As to quaternary structure, homodimer. Requires Mg(2+) as cofactor.

It catalyses the reaction N-(5-phospho-beta-D-ribosyl)anthranilate + diphosphate = 5-phospho-alpha-D-ribose 1-diphosphate + anthranilate. It participates in amino-acid biosynthesis; L-tryptophan biosynthesis; L-tryptophan from chorismate: step 2/5. Its function is as follows. Catalyzes the transfer of the phosphoribosyl group of 5-phosphorylribose-1-pyrophosphate (PRPP) to anthranilate to yield N-(5'-phosphoribosyl)-anthranilate (PRA). The protein is Anthranilate phosphoribosyltransferase of Haemophilus influenzae (strain 86-028NP).